The primary structure comprises 231 residues: DNA mismatch repair protein MutH (231 aa).

Belongs to the MutH family.

The protein localises to the cytoplasm. In terms of biological role, sequence-specific endonuclease that cleaves unmethylated GATC sequences. It is involved in DNA mismatch repair. This Klebsiella pneumoniae (strain 342) protein is DNA mismatch repair protein MutH.